Here is a 141-residue protein sequence, read N- to C-terminus: uncharacterized protein (141 aa).

Residues 4-139 (RTQMMYDMET…LIELFSKLDK (136 aa)) enclose the HTH marR-type domain. The segment at residues 53–76 (VTEFAPILEVSASHITAVTDALVE) is a DNA-binding region (H-T-H motif).

This is an uncharacterized protein from Bacillus subtilis (strain 168).